Consider the following 422-residue polypeptide: DNA (cytosine-5)-methyltransferase 3-like (422 aa).

Polar residues predominate over residues 1–11; sequence MGSRETPSSCS. The disordered stretch occupies residues 1-50; that stretch reads MGSRETPSSCSKTHETLNLETPESSSTDPDSPLEEQWPKSAPDLKEEDSM. A compositionally biased stretch (low complexity) spans 20-30; that stretch reads ETPESSSTDPD. An ADD domain is found at 76-208; the sequence is EVNVNQRNIE…LKAFHDREGA (133 aa). The GATA-type; atypical zinc finger occupies 87 to 117; that stretch reads ICLCCGSLQVYAQHPLFEGGICAPCKDKFLE. The segment at 128-184 adopts a PHD-type; atypical zinc-finger fold; the sequence is QSYCTICCSGHTLFICESPDCTRCYCFECVDILVGPGTSERINAMACWVCFLCLPFS.

In terms of assembly, homodimer. Heterotetramer composed of 1 DNMT3A homodimer and 2 DNMT3L subunits (DNMT3L-DNMT3A-DNMT3A-DNMT3L). Interacts with histone H3 (via N-terminus); interaction is strongly inhibited by methylation at lysine 4 (H3K4me). Interacts with EZH2; the interaction is direct. Interacts with SPOCD1.

It is found in the nucleus. Its function is as follows. Catalytically inactive regulatory factor of DNA methyltransferases that can either promote or inhibit DNA methylation depending on the context. Essential for the function of DNMT3A and DNMT3B: activates DNMT3A and DNMT3B by binding to their catalytic domain. Acts by accelerating the binding of DNA and S-adenosyl-L-methionine (AdoMet) to the methyltransferases and dissociates from the complex after DNA binding to the methyltransferases. Recognizes unmethylated histone H3 lysine 4 (H3K4me0) and induces de novo DNA methylation by recruitment or activation of DNMT3. Plays a key role in embryonic stem cells and germ cells. In germ cells, required for the methylation of imprinted loci together with DNMT3A. In male germ cells, specifically required to methylate retrotransposons, preventing their mobilization. Plays a key role in embryonic stem cells (ESCs) by acting both as an positive and negative regulator of DNA methylation. While it promotes DNA methylation of housekeeping genes together with DNMT3A and DNMT3B, it also acts as an inhibitor of DNA methylation at the promoter of bivalent genes. Interacts with the EZH2 component of the PRC2/EED-EZH2 complex, preventing interaction of DNMT3A and DNMT3B with the PRC2/EED-EZH2 complex, leading to maintain low methylation levels at the promoters of bivalent genes. Promotes differentiation of ESCs into primordial germ cells by inhibiting DNA methylation at the promoter of RHOX5, thereby activating its expression. This Rattus norvegicus (Rat) protein is DNA (cytosine-5)-methyltransferase 3-like (Dnmt3l).